The primary structure comprises 300 residues: D-alanine--D-alanine ligase (300 aa).

The region spanning 99–293 (KKILKYANIN…FAELLNSIVK (195 aa)) is the ATP-grasp domain. 126–181 (IEKIGYPVFVKPNSGGSSVATNLVKDKEGIKEAVELALKYDKEVMIENYTKGEEIT) is a binding site for ATP. Residues Asp248, Glu260, and Asn262 each contribute to the Mg(2+) site.

It belongs to the D-alanine--D-alanine ligase family. Mg(2+) serves as cofactor. Requires Mn(2+) as cofactor.

It localises to the cytoplasm. It carries out the reaction 2 D-alanine + ATP = D-alanyl-D-alanine + ADP + phosphate + H(+). It participates in cell wall biogenesis; peptidoglycan biosynthesis. In terms of biological role, cell wall formation. This Clostridium botulinum (strain Okra / Type B1) protein is D-alanine--D-alanine ligase.